The sequence spans 250 residues: Envelope glycoprotein L (250 aa).

Positions 1–18 are cleaved as a signal peptide; that stretch reads MELLLFVMSLILLTFSKA. Positions 31–239 constitute a gL betaherpesvirus-type domain; that stretch reads KLDDCIAAVI…EAYNSKLPFR (209 aa). The cysteines at positions 136 and 141 are disulfide-linked.

Belongs to the herpesviridae glycoprotein L (gL) family. Betaherpesvirinae gL subfamily. As to quaternary structure, interacts with glycoprotein H (gH); this interaction is necessary for the correct processing and cell surface expression of gH. Part of a gH-gL-gO complex.

The protein localises to the virion membrane. The protein resides in the host cell membrane. It is found in the host Golgi apparatus. Its subcellular location is the host trans-Golgi network. In terms of biological role, the heterodimer glycoprotein H-glycoprotein L is required for the fusion of viral and plasma membranes leading to virus entry into the host cell. Acts as a functional inhibitor of gH and maintains gH in an inhibited form. Upon binding to host integrins, gL dissociates from gH leading to activation of the viral fusion glycoproteins gB and gH. The sequence is that of Envelope glycoprotein L from Homo sapiens (Human).